The chain runs to 437 residues: Proline--tRNA ligase (437 aa).

The protein belongs to the class-II aminoacyl-tRNA synthetase family. ProS type 2 subfamily. In terms of assembly, homodimer.

The protein resides in the cytoplasm. The enzyme catalyses tRNA(Pro) + L-proline + ATP = L-prolyl-tRNA(Pro) + AMP + diphosphate. Its function is as follows. Catalyzes the attachment of proline to tRNA(Pro) in a two-step reaction: proline is first activated by ATP to form Pro-AMP and then transferred to the acceptor end of tRNA(Pro). This chain is Proline--tRNA ligase, found in Acidiphilium cryptum (strain JF-5).